A 324-amino-acid polypeptide reads, in one-letter code: Methionyl-tRNA formyltransferase (324 aa).

114-117 contributes to the (6S)-5,6,7,8-tetrahydrofolate binding site; that stretch reads SLLP.

The protein belongs to the Fmt family.

The catalysed reaction is L-methionyl-tRNA(fMet) + (6R)-10-formyltetrahydrofolate = N-formyl-L-methionyl-tRNA(fMet) + (6S)-5,6,7,8-tetrahydrofolate + H(+). In terms of biological role, attaches a formyl group to the free amino group of methionyl-tRNA(fMet). The formyl group appears to play a dual role in the initiator identity of N-formylmethionyl-tRNA by promoting its recognition by IF2 and preventing the misappropriation of this tRNA by the elongation apparatus. The sequence is that of Methionyl-tRNA formyltransferase from Azobacteroides pseudotrichonymphae genomovar. CFP2.